The primary structure comprises 632 residues: tRNA uridine 5-carboxymethylaminomethyl modification enzyme MnmG (632 aa).

Residues 15–20, isoleucine 127, and serine 182 contribute to the FAD site; that span reads GAGHAG. 276–290 is a binding site for NAD(+); the sequence is GPRYCPSIEDKIVRF. Position 373 (glutamine 373) interacts with FAD.

The protein belongs to the MnmG family. Homodimer. Heterotetramer of two MnmE and two MnmG subunits. Requires FAD as cofactor.

Its subcellular location is the cytoplasm. NAD-binding protein involved in the addition of a carboxymethylaminomethyl (cmnm) group at the wobble position (U34) of certain tRNAs, forming tRNA-cmnm(5)s(2)U34. The sequence is that of tRNA uridine 5-carboxymethylaminomethyl modification enzyme MnmG from Streptococcus pyogenes serotype M28 (strain MGAS6180).